The following is a 274-amino-acid chain: uncharacterized protein (274 aa).

Belongs to the type II cytokine receptor family.

This is an uncharacterized protein from Sus scrofa (Pig).